Here is a 267-residue protein sequence, read N- to C-terminus: NAD kinase 2 (267 aa).

D52 functions as the Proton acceptor in the catalytic mechanism. NAD(+)-binding positions include 52 to 53 (DG), 124 to 125 (NE), R151, D153, 164 to 169 (TAYNKS), and A188.

Belongs to the NAD kinase family. It depends on a divalent metal cation as a cofactor.

Its subcellular location is the cytoplasm. The enzyme catalyses NAD(+) + ATP = ADP + NADP(+) + H(+). Involved in the regulation of the intracellular balance of NAD and NADP, and is a key enzyme in the biosynthesis of NADP. Catalyzes specifically the phosphorylation on 2'-hydroxyl of the adenosine moiety of NAD to yield NADP. The protein is NAD kinase 2 of Bacillus subtilis (strain 168).